Reading from the N-terminus, the 321-residue chain is Altered inheritance of mitochondria protein 18, mitochondrial (321 aa).

The transit peptide at 1–72 (MDRGRCANML…LLATSLYYRD (72 aa)) directs the protein to the mitochondrion.

Belongs to the AIM18/AIM46 family.

The protein localises to the mitochondrion. The protein is Altered inheritance of mitochondria protein 18, mitochondrial (AIM18) of Saccharomyces cerevisiae (strain RM11-1a) (Baker's yeast).